The sequence spans 166 residues: MTESTSRRPAYARLLDRAVRILAVRDHSEQELRRKLAAPIMGKNGPEEIDATVEDYERVIAWCHEHGYLDDSRFVARFIASRSRKGYGPARIRQELNQKGISREATEKAMRECDIDWCALARDQATRKYGEPLPTVFSEKVKIQRFLLYRGYLMEDIQDIWRNFAD.

This sequence belongs to the RecX family.

It localises to the cytoplasm. Modulates RecA activity. This Escherichia fergusonii (strain ATCC 35469 / DSM 13698 / CCUG 18766 / IAM 14443 / JCM 21226 / LMG 7866 / NBRC 102419 / NCTC 12128 / CDC 0568-73) protein is Regulatory protein RecX.